The chain runs to 401 residues: 4-diphosphocytidyl-2-C-methyl-D-erythritol kinase, chloroplastic (401 aa).

The transit peptide at 1-52 (MACSTHLLSQSLYPLNRANPAAARGHLRFQASPSVRLGSGTSRRRALGLRVA) directs the protein to the chloroplast. An ATP-binding site is contributed by 180–190 (PTGAGLGGGSS).

It belongs to the GHMP kinase family. IspE subfamily.

The protein localises to the plastid. Its subcellular location is the chloroplast stroma. It catalyses the reaction 4-CDP-2-C-methyl-D-erythritol + ATP = 4-CDP-2-C-methyl-D-erythritol 2-phosphate + ADP + H(+). It participates in isoprenoid biosynthesis; isopentenyl diphosphate biosynthesis via DXP pathway; isopentenyl diphosphate from 1-deoxy-D-xylulose 5-phosphate: step 3/6. Functionally, enzyme of the plastid non-mevalonate pathway for isoprenoid biosynthesis that catalyzes the phosphorylation of the position 2 hydroxy group of 4-diphosphocytidyl-2C-methyl-D-erythritol. Is essential for chloroplast development. In Oryza sativa subsp. japonica (Rice), this protein is 4-diphosphocytidyl-2-C-methyl-D-erythritol kinase, chloroplastic (ISPE).